The chain runs to 343 residues: F17c-G fimbrial adhesin (343 aa).

The first 22 residues, 1–22 (MTNFYKVFLAVFILVCCNISHA), serve as a signal peptide directing secretion. The segment at 23-199 (AVSFIGSTEN…LNPFTLNDTV (177 aa)) is receptor-binding lectin domain. Residues 65-66 (AN), 110-111 (DT), and 138-141 (STQG) contribute to the a carbohydrate site. Cysteines 75 and 132 form a disulfide. Residues 200–343 (TSCRLLTPSA…GISTFTFSYQ (144 aa)) are fimbrillin-binding domain. Residues 287–307 (LKFGPDSPVKGNENQWQLSTG) are disordered. The span at 298 to 307 (NENQWQLSTG) shows a compositional bias: polar residues.

This sequence belongs to the fimbrial protein family.

The protein resides in the fimbrium. Its function is as follows. Essential fimbrial adhesion factor that mediates binding to N-acetylglucosamine-containing receptors in the host intestinal microvilli, leading to colonization of the intestinal tissue, and diarrhea or septicemia. Also confers adhesiveness to laminin and basement membranes. The protein is F17c-G fimbrial adhesin (f17cG) of Escherichia coli.